The following is a 512-amino-acid chain: Amidase 2 (512 aa).

Active-site charge relay system residues include lysine 122 and serine 197. Substrate-binding positions include serine 197 and 218–221; that span reads IGGS. The active-site Acyl-ester intermediate is serine 221.

This sequence belongs to the amidase family.

It carries out the reaction a monocarboxylic acid amide + H2O = a monocarboxylate + NH4(+). It participates in xenobiotic degradation. Its function is as follows. Amidase; part of the Fusarium detoxification of benzoxazolinone cluster 2 (FDB2) involved in the degradation of benzoxazolinones produced by the host plant. Maize, wheat, and rye produce the 2 benzoxazinone phytoanticipins 2,4-dihy-droxy-7-methoxy-1,4-benzoxazin-3-one (DIMBOA) and 2,4-dihydroxy-1,4-benzoxazin-3-one (DIBOA) that, due to their inherent instability once released, spontaneously degrade to the more stable corresponding benzoxazolinones, 6-methoxy-2-benzoxazolinone (MBOA) and 2-benzoxazolinone (BOA), respectively. The first step in the detoxification of benzoxazolinones involves the hydrolysis of the cyclic ester bond of benzoxazolinones by the FDB1 cluster gamma-lactamase MBL1 to aminophenols. MBL1 is able to convert BOA into 2-aminophenol (2-AP), as well as MBOA into 5-methoxy-2-aminophenol (2-AMP). The FDB2 cluster N-malonyltransferase FDB2/NAT1 then metabolizes aminophenols via N-malonylation to non-toxic malonamic acids. FDB2/NAT1 converts 2-AP into N-(2-hydroxyphenyl) malonamic acid (HPMA) and 2-AMP into N-(2-hydroxy-4-methoxyphenyl) malonamic acid (HMPMA). The duplicated dienlactone hydrolases DLH1 and DLH2 may provide redundant function for hydrolyzing the lactone moiety in the BOA molecule. The roles of the amidases an other enzymes encoded by the 2 FDB clusters have not been identified so far. The sequence is that of Amidase 2 from Gibberella moniliformis (strain M3125 / FGSC 7600) (Maize ear and stalk rot fungus).